The following is a 345-amino-acid chain: PI-PLC X domain-containing protein 1 (345 aa).

A PI-PLC X-box domain is found at 52–228 (QLWDVPLHHL…QVIVSYEDEA (177 aa)).

Expressed at highest levels in brain and kidney. Also detected in stomach, thymus and skeletal muscle.

It is found in the cytoplasm. The sequence is that of PI-PLC X domain-containing protein 1 (Plcxd1) from Mus musculus (Mouse).